The chain runs to 71 residues: Large ribosomal subunit protein uL29 (71 aa).

It belongs to the universal ribosomal protein uL29 family.

In Rickettsia akari (strain Hartford), this protein is Large ribosomal subunit protein uL29.